We begin with the raw amino-acid sequence, 216 residues long: MOB kinase activator 3B (216 aa).

Zn(2+) contacts are provided by C82, C87, H164, and H169.

Modulates LATS1 expression in the Hippo signaling pathway which plays a pivotal role in organ size control and tumor suppression by restricting proliferation and promoting apoptosis. In Mus musculus (Mouse), this protein is MOB kinase activator 3B (Mob3b).